The sequence spans 282 residues: DegV domain-containing protein SPy_0865/M5005_Spy0672 (282 aa).

The 278-residue stretch at Leu3–Pro280 folds into the DegV domain. Positions 61 and 94 each coordinate hexadecanoate.

Its function is as follows. May bind long-chain fatty acids, such as palmitate, and may play a role in lipid transport or fatty acid metabolism. This chain is DegV domain-containing protein SPy_0865/M5005_Spy0672, found in Streptococcus pyogenes serotype M1.